A 335-amino-acid polypeptide reads, in one-letter code: Mitochondrial thiamine diphosphate carrier 1 (335 aa).

6 helical membrane-spanning segments follow: residues 13–29 (KRAV…GAIS), 88–105 (VPAL…FAVL), 127–150 (YLSY…FDLL), 182–199 (LYAG…YAGL), 231–247 (SLSS…SGTV), and 304–323 (GIVP…FVAY). Solcar repeat units follow at residues 13–111 (KRAV…VKSF), 124–210 (LSPY…FKRW), and 232–329 (LSSF…ASDW).

The protein belongs to the mitochondrial carrier (TC 2.A.29) family.

Its subcellular location is the mitochondrion inner membrane. In terms of biological role, mitochondrial transporter that mediates uptake of thiamine diphosphate (ThDP) into mitochondria. In Arabidopsis thaliana (Mouse-ear cress), this protein is Mitochondrial thiamine diphosphate carrier 1.